A 366-amino-acid chain; its full sequence is Carboxy-cis,cis-muconate cyclase (366 aa).

Residues H149, R197, E213, and R275 contribute to the active site.

This sequence belongs to the cycloisomerase 2 family. As to quaternary structure, homotetramer.

The enzyme catalyses 3-carboxy-2,5-dihydro-5-oxofuran-2-acetate = 3-carboxy-cis,cis-muconate. It participates in aromatic compound metabolism; beta-ketoadipate pathway; 3-carboxy-cis,cis-muconate from 3-carboxy-2,5-dihydro-5-oxofuran-2-acetate: step 1/1. Catalyzes a syn cycloisomerization. Also possesses mle activity. The polypeptide is Carboxy-cis,cis-muconate cyclase (Neurospora crassa (strain ATCC 24698 / 74-OR23-1A / CBS 708.71 / DSM 1257 / FGSC 987)).